The primary structure comprises 202 residues: Small ribosomal subunit protein uS2 (202 aa).

This sequence belongs to the universal ribosomal protein uS2 family.

This chain is Small ribosomal subunit protein uS2 (rps2), found in Pyrococcus abyssi (strain GE5 / Orsay).